Reading from the N-terminus, the 187-residue chain is Elongation factor P (187 aa).

This sequence belongs to the elongation factor P family.

The protein localises to the cytoplasm. Its pathway is protein biosynthesis; polypeptide chain elongation. In terms of biological role, involved in peptide bond synthesis. Stimulates efficient translation and peptide-bond synthesis on native or reconstituted 70S ribosomes in vitro. Probably functions indirectly by altering the affinity of the ribosome for aminoacyl-tRNA, thus increasing their reactivity as acceptors for peptidyl transferase. In Corynebacterium urealyticum (strain ATCC 43042 / DSM 7109), this protein is Elongation factor P.